Consider the following 1444-residue polypeptide: Probable serine/threonine-protein kinase irlC (1444 aa).

The interval 335–370 (TLINNNNNNNNNNNNNNNNNNNNNNNNNNNNNNNSK) is disordered. A compositionally biased stretch (low complexity) spans 338 to 368 (NNNNNNNNNNNNNNNNNNNNNNNNNNNNNNN). The SWIM-type zinc-finger motif lies at 495-529 (FTFYLSFGEIFTCSCEDYKREFSCKHMFFILLNYY). Residues 584 to 613 (TSPFQSINNNNNNNLNNNNNNNLNNNNNNE) are compositionally biased toward low complexity. Disordered regions lie at residues 584–619 (TSPF…NKFK) and 864–938 (QKEK…ITPI). Coiled-coil stretches lie at residues 593-620 (NNNN…KFKE) and 847-879 (IKAE…KSKI). The span at 864 to 876 (QKEKKKQKQKQSK) shows a compositional bias: basic residues. Residues 885 to 937 (SSSSSSSSSPSTSNTTITSTTPTTTTTTTTTTTPTTTTTTTTTSSPKQKPITP) show a composition bias toward low complexity. Residues 981-1246 (RKEENVLGRG…IEKILLHPFF (266 aa)) enclose the Protein kinase domain. ATP-binding positions include 987-995 (LGRGSNGTL) and Lys-1010. Asp-1116 functions as the Proton acceptor in the catalytic mechanism. The KEN domain occupies 1279–1444 (NYQEINLKNN…LIYFNDLIIK (166 aa)).

Belongs to the protein kinase superfamily. Ser/Thr protein kinase family.

It carries out the reaction L-seryl-[protein] + ATP = O-phospho-L-seryl-[protein] + ADP + H(+). The catalysed reaction is L-threonyl-[protein] + ATP = O-phospho-L-threonyl-[protein] + ADP + H(+). This is Probable serine/threonine-protein kinase irlC (irlC) from Dictyostelium discoideum (Social amoeba).